The sequence spans 158 residues: Transcription elongation factor GreA (158 aa).

Residues 47–74 (AEYHAAKEEQSHNEGRINELEDKLARAD) are a coiled coil.

Belongs to the GreA/GreB family.

In terms of biological role, necessary for efficient RNA polymerase transcription elongation past template-encoded arresting sites. The arresting sites in DNA have the property of trapping a certain fraction of elongating RNA polymerases that pass through, resulting in locked ternary complexes. Cleavage of the nascent transcript by cleavage factors such as GreA or GreB allows the resumption of elongation from the new 3'terminus. GreA releases sequences of 2 to 3 nucleotides. This is Transcription elongation factor GreA from Rhodopseudomonas palustris (strain ATCC BAA-98 / CGA009).